The following is an 896-amino-acid chain: Lipoxygenase 2, chloroplastic (896 aa).

Residues 1 to 56 (MYCRESLSSLQTLNVAKSLSSLFPKQSALINPISAGRRNNLPRPNLRRRCKVTASR) constitute a chloroplast transit peptide. In terms of domain architecture, PLAT spans 79 to 199 (ITAQEEFLEG…VDPTKRIFFS (121 aa)). The interval 175-232 (GSITFTCESWVAPKSVDPTKRIFFSDKSYLPSQTPEPLKKYRKEELETLQGKNREEVG) is EIF4E2 binding. One can recognise a Lipoxygenase domain in the interval 202-896 (SYLPSQTPEP…GMGVPYSISI (695 aa)). Fe cation contacts are provided by histidine 554, histidine 559, histidine 746, asparagine 750, and isoleucine 896.

It belongs to the lipoxygenase family. As to quaternary structure, interacts with EIF4E2. Fe cation serves as cofactor. In terms of tissue distribution, in leaves and inflorescences but not abundant in seeds, roots and stems.

It is found in the plastid. The protein localises to the chloroplast. The protein resides in the cytoplasm. The catalysed reaction is (9Z,12Z)-octadecadienoate + O2 = (13S)-hydroperoxy-(9Z,11E)-octadecadienoate. It catalyses the reaction (9Z,12Z,15Z)-octadecatrienoate + O2 = (13S)-hydroperoxy-(9Z,11E,15Z)-octadecatrienoate. Its pathway is lipid metabolism; oxylipin biosynthesis. 13S-lipoxygenase that can use linolenic acid as substrates. Plant lipoxygenases may be involved in a number of diverse aspects of plant physiology including growth and development, pest resistance, and senescence or responses to wounding. Catalyzes the hydroperoxidation of lipids containing a cis,cis-1,4-pentadiene structure. Required for the wound-induced synthesis of jasmonic acid (JA) in leaves. The polypeptide is Lipoxygenase 2, chloroplastic (LOX2) (Arabidopsis thaliana (Mouse-ear cress)).